The primary structure comprises 4910 residues: Midasin (4910 aa).

AAA-ATPase protomer regions lie at residues 305–528 (IQNS…DILF) and 636–975 (MEQI…TDII). Residues 315-322 (GKAGSGKT) and 653-660 (GETGTGKT) contribute to the ATP site. The tract at residues 695–803 (VNSKTVAVPI…KKFEAQSSSI (109 aa)) is interaction with RIX1. A Phosphothreonine modification is found at Thr1026. 4 AAA-ATPase protomer regions span residues 1054-1280 (HYII…WALR), 1345-1624 (KGMR…VEFI), 1732-1985 (RVVR…QLLI), and 2036-2286 (VYES…DELH). ATP contacts are provided by residues 1083–1090 (GPTSSGKT), 1368–1375 (GETGCGKT), 1747–1754 (GSPGVGKT), and 2054–2061 (GPSNSGKT). The linker stretch occupies residues 2372–4075 (EVGKWANNVL…DGEGAQNNNK (1704 aa)). Residue Ser2971 is modified to Phosphoserine. Disordered regions lie at residues 4045–4547 (SPQP…EKMD), 4555–4574 (SDID…SGFI), and 4579–4600 (SEED…EDDS). Positions 4078–4088 (EQDEDLTEDAQ) are enriched in acidic residues. Residues 4089 to 4098 (NENKEQQDKD) show a composition bias toward basic and acidic residues. A compositionally biased stretch (acidic residues) spans 4099–4154 (ERDDENEDDAVEMEGDMAGELEDLSNGEENDDEDTDSEEEELDEEIDDLNEDDPNA). Over residues 4155-4174 (IDDKMWDDKASDNSKEKDTD) the composition is skewed to basic and acidic residues. 3 stretches are compositionally biased toward acidic residues: residues 4202–4244 (GDED…EDLE), 4251–4274 (ETLD…DVDM), and 4288–4358 (GNED…EEEL). Position 4353 is a phosphoserine (Ser4353). Residues 4359–4372 (KQDAAMEENKEKGG) show a composition bias toward basic and acidic residues. A Phosphothreonine modification is found at Thr4388. Composition is skewed to basic and acidic residues over residues 4435 to 4447 (DVTK…REEA) and 4481 to 4495 (LEKN…EHVE). Residues 4498–4516 (NTETDTQALGSATQDQLQT) show a composition bias toward polar residues. The span at 4517–4531 (IDEDMAIDDDREEQE) shows a compositional bias: acidic residues. Ser4555 bears the Phosphoserine mark. Residues 4557-4570 (IDAHDANNDVDSKK) are compositionally biased toward basic and acidic residues. Residues 4704–4899 (QIMIALDDSK…SELPEMLSLI (196 aa)) form the VWFA domain.

The protein belongs to the midasin family. As to quaternary structure, associates with pre-60S ribosomes in the nucleoplasm. Interacts (via its hexameric AAA ATPase ring) with the RIX1 complex (via RIX1); this interaction is crucial for recruitment of MDN1 to the pre-ribosomal particle. Interacts (via VWFA/MIDAS domain) with YTM1 (via UBL domain). Interacts (via VWFA/MIDAS domain) with RSA4 (via UBL domain).

It is found in the nucleus. The protein localises to the nucleolus. The protein resides in the nucleoplasm. Its function is as follows. Nuclear chaperone required for maturation and nuclear export of pre-60S ribosome subunits. Functions at successive maturation steps to remove ribosomal factors at critical transition points, first driving the exit of early pre-60S particles from the nucleolus and then driving late pre-60S particles from the nucleus. At an early stage in 60S maturation, mediates the dissociation of the NOP7 complex (YTM1-ERB1-NOP7) from early pre-60S particles, rendering them competent for export from the nucleolus to the nucleoplasm. Subsequently recruited to the nucleoplasmic particles through interaction with the RIX1 complex. This binding is only possible if the 5S RNP at the central protuberance has undergone the rotation to complete its maturation. After remodeling, removes the ribosome biogenesis factor RSA4 in an ATP hydrolysis-driven step from pre-60S ribosomal subunits, rendering them competent for export from the nucleoplasm to the cytoplasm. Activates the GTPase activity of NOG2, which disengages from the pre-60S particle upon GTP hydrolysis, thus freeing its binding site for the nuclear export factor NMD3. The protein is Midasin (MDN1) of Saccharomyces cerevisiae (strain ATCC 204508 / S288c) (Baker's yeast).